Reading from the N-terminus, the 135-residue chain is DNA-binding protein inhibitor ID-2-B (135 aa).

A bHLH domain is found at 23-75; it reads ARSKAPVDEPMSLLYNMNDCYSKLKELVPSIPPNKKVSKMEILQHVIDYILDL. Residues 108 to 117 carry the Nuclear export signal motif; it reads LNTDISILSL.

Heterodimer with other HLH proteins.

The protein localises to the cytoplasm. It localises to the nucleus. Functionally, transcriptional regulator (lacking a basic DNA binding domain) which negatively regulates the basic helix-loop-helix (bHLH) transcription factors by forming heterodimers and inhibiting their DNA binding and transcriptional activity. Inhibits the activity of both neurogenic (neurod1/neuroD) and myogenic (myod1/myoD) bHLH factors. May play a role in the regulation of the circadian clock. The protein is DNA-binding protein inhibitor ID-2-B (id2-b) of Xenopus laevis (African clawed frog).